We begin with the raw amino-acid sequence, 517 residues long: Crotonobetaine/carnitine--CoA ligase (517 aa).

It belongs to the ATP-dependent AMP-binding enzyme family.

The catalysed reaction is 4-(trimethylamino)butanoate + ATP + CoA = 4-(trimethylamino)butanoyl-CoA + AMP + diphosphate. The enzyme catalyses crotonobetaine + ATP + CoA = crotonobetainyl-CoA + AMP + diphosphate. It catalyses the reaction (R)-carnitine + ATP + CoA = (R)-carnitinyl-CoA + AMP + diphosphate. Its pathway is amine and polyamine metabolism; carnitine metabolism. Functionally, catalyzes the transfer of CoA to carnitine, generating the initial carnitinyl-CoA needed for the CaiB reaction cycle. Also has activity toward crotonobetaine and gamma-butyrobetaine. In Shigella sonnei (strain Ss046), this protein is Crotonobetaine/carnitine--CoA ligase.